We begin with the raw amino-acid sequence, 247 residues long: DNA polymerase sliding clamp (247 aa).

Belongs to the PCNA family. In terms of assembly, homotrimer. The subunits circularize to form a toroid; DNA passes through its center. Replication factor C (RFC) is required to load the toroid on the DNA.

Its function is as follows. Sliding clamp subunit that acts as a moving platform for DNA processing. Responsible for tethering the catalytic subunit of DNA polymerase and other proteins to DNA during high-speed replication. The sequence is that of DNA polymerase sliding clamp from Halobacterium salinarum (strain ATCC 29341 / DSM 671 / R1).